Reading from the N-terminus, the 369-residue chain is Core histone macro-H2A.1 (369 aa).

N6-lactoyllysine; alternate occurs at positions 7 and 9. Residues 15–90 (RSAKAGVIFP…ILLAVANDEE (76 aa)) enclose the Histone H2A domain. N6-methyllysine is present on Lys-18. Lys-116 is modified (N6-acetyllysine; alternate). Lys-116 is covalently cross-linked (Glycyl lysine isopeptide (Lys-Gly) (interchain with G-Cter in ubiquitin); alternate). Residue Lys-117 forms a Glycyl lysine isopeptide (Lys-Gly) (interchain with G-Cter in ubiquitin) linkage. Position 123 is an N6-acetyllysine; alternate (Lys-123). Position 123 is an N6,N6-dimethyllysine; alternate (Lys-123). Lys-123 is covalently cross-linked (Glycyl lysine isopeptide (Lys-Gly) (interchain with G-Cter in SUMO2); alternate). A disordered region spans residues 128 to 180 (ITPPPAKKAKSPSQKKTVSKKTGGKKGARKSKKKQGEVSKSASADSTTEGTPA). The residue at position 129 (Thr-129) is a Phosphothreonine. The segment covering 144–160 (TVSKKTGGKKGARKSKK) has biased composition (basic residues). The segment covering 165–177 (VSKSASADSTTEG) has biased composition (polar residues). Residue Lys-167 forms a Glycyl lysine isopeptide (Lys-Gly) (interchain with G-Cter in SUMO2) linkage. 2 positions are modified to phosphoserine: Ser-170 and Ser-173. Residue Thr-178 is modified to Phosphothreonine. The Macro domain maps to 184-367 (TVLSTKSLFL…IYVQEMAKLD (184 aa)). Lys-189 participates in a covalent cross-link: Glycyl lysine isopeptide (Lys-Gly) (interchain with G-Cter in SUMO2). Positions 203, 204, 226, 275, 312, 313, 314, and 316 each coordinate a glycoprotein. Residue Lys-320 forms a Glycyl lysine isopeptide (Lys-Gly) (interchain with G-Cter in SUMO2) linkage.

Belongs to the histone H2A family. As to quaternary structure, the nucleosome is a histone octamer containing two molecules each of H2A, H2B, H3 and H4 assembled in one H3-H4 heterotetramer and two H2A-H2B heterodimers. ADP-ribosylated. Post-translationally, monoubiquitinated at either Lys-116 or Lys-117. May also be polyubiquitinated. Ubiquitination is mediated by the CUL3/SPOP E3 complex and does not promote proteasomal degradation. Instead, it is required for enrichment in inactive X chromosome chromatin. Present in liver (at protein level).

It is found in the nucleus. The protein resides in the chromosome. Variant histone H2A which replaces conventional H2A in a subset of nucleosomes where it represses transcription. Nucleosomes wrap and compact DNA into chromatin, limiting DNA accessibility to the cellular machineries which require DNA as a template. Histones thereby play a central role in transcription regulation, DNA repair, DNA replication and chromosomal stability. DNA accessibility is regulated via a complex set of post-translational modifications of histones, also called histone code, and nucleosome remodeling. In terms of biological role, isoform that specifically binds poly-ADP-ribose and O-acetyl-ADP-ribose and plays a key role in NAD(+) metabolism. Able to bind to the ends of poly-ADP-ribose chains created by PARP1 and cap them. This prevents PARP1 from further addition of ADP-ribose and thus limits the consumption of nuclear NAD(+), allowing the cell to maintain proper NAD(+) levels in both the nucleus and the mitochondria to promote proper mitochondrial respiration. Its function is as follows. In contrast to isoform 1, does not bind poly-ADP-ribose. This chain is Core histone macro-H2A.1, found in Gallus gallus (Chicken).